The following is a 418-amino-acid chain: Putative F-box protein At1g20795 (418 aa).

Residues 1-46 form the F-box domain; it reads METLGLPLPLFEKILFRLDPISLVMMKCTRRSFNSHISEDPYFKSK.

The polypeptide is Putative F-box protein At1g20795 (Arabidopsis thaliana (Mouse-ear cress)).